Reading from the N-terminus, the 479-residue chain is Oxysterol-binding protein homolog C23B6.01c (479 aa).

A phosphoserine mark is found at Ser328, Ser408, Ser409, and Ser421. Positions 404–418 (KPEDSSIHKHSRDAS) are enriched in basic and acidic residues. Residues 404–479 (KPEDSSIHKH…KLHEEQDPAL (76 aa)) are disordered. Over residues 439–452 (QSTASFVTYRSDNG) the composition is skewed to polar residues. The span at 470–479 (KLHEEQDPAL) shows a compositional bias: basic and acidic residues.

The protein belongs to the OSBP family.

It is found in the cytoplasm. Its subcellular location is the nucleus. The polypeptide is Oxysterol-binding protein homolog C23B6.01c (Schizosaccharomyces pombe (strain 972 / ATCC 24843) (Fission yeast)).